A 188-amino-acid polypeptide reads, in one-letter code: Transcription factor FapR (188 aa).

This sequence belongs to the FapR family.

Transcriptional factor involved in regulation of membrane lipid biosynthesis by repressing genes involved in fatty acid and phospholipid metabolism. The sequence is that of Transcription factor FapR from Bacillus velezensis (strain DSM 23117 / BGSC 10A6 / LMG 26770 / FZB42) (Bacillus amyloliquefaciens subsp. plantarum).